A 227-amino-acid chain; its full sequence is PKHD-type hydroxylase BPSS1206 (227 aa).

In terms of domain architecture, Fe2OG dioxygenase spans 78-178; the sequence is KVFPPLFNRY…RVASFFWIQS (101 aa). Fe cation contacts are provided by histidine 96, aspartate 98, and histidine 159. 2-oxoglutarate is bound at residue arginine 169.

The cofactor is Fe(2+). It depends on L-ascorbate as a cofactor.

The protein is PKHD-type hydroxylase BPSS1206 of Burkholderia pseudomallei (strain K96243).